A 134-amino-acid polypeptide reads, in one-letter code: Probable glycine cleavage system H protein (134 aa).

Residues 29–110 enclose the Lipoyl-binding domain; the sequence is TVLVGITDYA…PYGAWIAKIK (82 aa). N6-lipoyllysine is present on Lys-70.

The protein belongs to the GcvH family. As to quaternary structure, the glycine cleavage system is composed of four proteins: P, T, L and H. It depends on (R)-lipoate as a cofactor.

Functionally, the glycine cleavage system catalyzes the degradation of glycine. The H protein shuttles the methylamine group of glycine from the P protein to the T protein. This chain is Probable glycine cleavage system H protein, found in Pyrococcus horikoshii (strain ATCC 700860 / DSM 12428 / JCM 9974 / NBRC 100139 / OT-3).